The following is a 255-amino-acid chain: NAD-dependent protein deacylase (255 aa).

In terms of domain architecture, Deacetylase sirtuin-type spans 1–253 (MIEEAPRIIA…VKVKRCLENK (253 aa)). Residue 20–39 (GAGVSAESGIPTFRDRGGLW) coordinates NAD(+). Substrate contacts are provided by tyrosine 64 and arginine 67. NAD(+) is bound at residue 98–101 (QNID). The Proton acceptor role is filled by histidine 116. Zn(2+) is bound by residues cysteine 124, cysteine 127, cysteine 151, and cysteine 154. Residues 191-193 (GTS), 217-219 (NTK), and alanine 235 contribute to the NAD(+) site.

It belongs to the sirtuin family. Class III subfamily. Zn(2+) serves as cofactor.

The protein localises to the cytoplasm. The enzyme catalyses N(6)-acetyl-L-lysyl-[protein] + NAD(+) + H2O = 2''-O-acetyl-ADP-D-ribose + nicotinamide + L-lysyl-[protein]. It catalyses the reaction N(6)-succinyl-L-lysyl-[protein] + NAD(+) + H2O = 2''-O-succinyl-ADP-D-ribose + nicotinamide + L-lysyl-[protein]. Its function is as follows. NAD-dependent lysine deacetylase and desuccinylase that specifically removes acetyl and succinyl groups on target proteins. Modulates the activities of several proteins which are inactive in their acylated form. Deacetylates the N-terminal lysine residue of Alba, the major archaeal chromatin protein and that, in turn, increases Alba's DNA binding affinity, thereby repressing transcription. This chain is NAD-dependent protein deacylase, found in Thermococcus sibiricus (strain DSM 12597 / MM 739).